We begin with the raw amino-acid sequence, 809 residues long: Carbon monoxide dehydrogenase large chain (809 aa).

Residue cysteine 388 participates in Cu(+) binding. Glutamate 763 contributes to the Mo-molybdopterin cytosine dinucleotide binding site.

In terms of assembly, dimer of heterotrimers. Each heterotrimer consists of a large, a medium and a small subunit. The cofactor is Cu(+). Mo-molybdopterin cytosine dinucleotide is required as a cofactor.

The enzyme catalyses CO + a quinone + H2O = a quinol + CO2. Functionally, catalyzes the oxidation of carbon monoxide to carbon dioxide. In Afipia carboxidovorans (strain ATCC 49405 / DSM 1227 / KCTC 32145 / OM5) (Oligotropha carboxidovorans), this protein is Carbon monoxide dehydrogenase large chain (coxL).